A 339-amino-acid polypeptide reads, in one-letter code: MKIVIDLMGADHGVLPIIEGVSRALENKSFSAVLVGDKDKATPFISKELASKVEMIHTQDYIKMEEVATEAIKRKESSIYLGMDILKNGADALISAGHSGATMGLATLRLGRIKGVERPAICTLMPSVGKRPSVLLDAGANTDCKPEYLIDFALMGYEYAKSVLHYDSPKVGLLSNGEEDIKGNMLVKETHKMLKAYDFFYGNVEGSDIFKGVVDVVVCDGFMGNVVLKTTEGVASAIGSIFKDEIKSSFKSKMGALMLKNAFDILKQKTDYAEYGGAPLLGVNKSVIISHGKSNARAIECAIYQAISAVESQVCLRITKAFESLKPSVSVPQSDQQDA.

This sequence belongs to the PlsX family. Homodimer. Probably interacts with PlsY.

It localises to the cytoplasm. The catalysed reaction is a fatty acyl-[ACP] + phosphate = an acyl phosphate + holo-[ACP]. It participates in lipid metabolism; phospholipid metabolism. Its function is as follows. Catalyzes the reversible formation of acyl-phosphate (acyl-PO(4)) from acyl-[acyl-carrier-protein] (acyl-ACP). This enzyme utilizes acyl-ACP as fatty acyl donor, but not acyl-CoA. The sequence is that of Phosphate acyltransferase from Helicobacter pylori (strain Shi470).